The chain runs to 290 residues: Large ribosomal subunit protein uL2m (290 aa).

The protein belongs to the universal ribosomal protein uL2 family. In terms of assembly, probably part of the large ribosomal subunit.

It localises to the hydrogenosome. The sequence is that of Large ribosomal subunit protein uL2m (rpl2) from Nyctotherus ovalis.